Here is a 122-residue protein sequence, read N- to C-terminus: MARIAGVNIPTNKRVEIALRYIHGIGPSFSKEICEKVGVEPSRRVNQLTDAEVIKIREAIDAGYMVEGDLRRDTSMNIKRLMDLGCYRGLRHRKKLPVRGQRTHTNARTRKGPAKPIAGKKK.

Residues 94–122 (KKLPVRGQRTHTNARTRKGPAKPIAGKKK) are disordered.

Belongs to the universal ribosomal protein uS13 family. Part of the 30S ribosomal subunit. Forms a loose heterodimer with protein S19. Forms two bridges to the 50S subunit in the 70S ribosome.

Functionally, located at the top of the head of the 30S subunit, it contacts several helices of the 16S rRNA. In the 70S ribosome it contacts the 23S rRNA (bridge B1a) and protein L5 of the 50S subunit (bridge B1b), connecting the 2 subunits; these bridges are implicated in subunit movement. Contacts the tRNAs in the A and P-sites. In Hyphomonas neptunium (strain ATCC 15444), this protein is Small ribosomal subunit protein uS13.